Consider the following 440-residue polypeptide: UDP-N-acetylmuramoylalanine--D-glutamate ligase (440 aa).

An ATP-binding site is contributed by 115 to 121 (GSNGKST).

It belongs to the MurCDEF family.

It localises to the cytoplasm. The catalysed reaction is UDP-N-acetyl-alpha-D-muramoyl-L-alanine + D-glutamate + ATP = UDP-N-acetyl-alpha-D-muramoyl-L-alanyl-D-glutamate + ADP + phosphate + H(+). The protein operates within cell wall biogenesis; peptidoglycan biosynthesis. Cell wall formation. Catalyzes the addition of glutamate to the nucleotide precursor UDP-N-acetylmuramoyl-L-alanine (UMA). This Vibrio cholerae serotype O1 (strain ATCC 39541 / Classical Ogawa 395 / O395) protein is UDP-N-acetylmuramoylalanine--D-glutamate ligase.